The primary structure comprises 713 residues: P-loop NTPase domain-containing protein LPA1 homolog (713 aa).

Disordered stretches follow at residues 218–249 (AKKRSGISTTSTIDFDKTRPLNDKPDGKPIGK), 504–575 (TSQA…EDLS), and 650–713 (LDSP…APDK). The span at 231–246 (DFDKTRPLNDKPDGKP) shows a compositional bias: basic and acidic residues. Positions 504–531 (TSQAGSVNESWDNANEGTGSHVPSSSGS) are enriched in polar residues. The segment covering 533 to 544 (KKLDGHCKEIKE) has biased composition (basic and acidic residues). The segment covering 551–562 (SDDDEEEEEEAA) has biased composition (acidic residues). Residues 656-668 (ARSSSALPISASS) show a composition bias toward low complexity.

In terms of biological role, required for the accumulation of phytic acid in seeds. Phytic acid is the primary storage form of phosphorus in cereal grains and other plant seeds. The protein is P-loop NTPase domain-containing protein LPA1 homolog of Oryza sativa subsp. japonica (Rice).